Here is a 156-residue protein sequence, read N- to C-terminus: AP-1 complex subunit sigma-1 (156 aa).

The protein belongs to the adaptor complexes small subunit family. Adaptor protein complex 1 (AP-1) is a heterotetramer composed of two large adaptins (gamma-type subunit and beta-type subunit), a medium adaptin (mu-type subunit) and a small adaptin (sigma-type subunit).

It is found in the golgi apparatus. It localises to the trans-Golgi network. Its subcellular location is the cytoplasmic vesicle. The protein resides in the clathrin-coated vesicle membrane. Subunit of clathrin-associated adaptor protein complex 1 that plays a role in protein sorting in the trans-Golgi network (TGN) and endosomes. The AP complexes mediate the recruitment of clathrin to membranes and the recognition of sorting signals within the cytosolic tails of transmembrane cargo molecules. Also involved in early steps of phagocytosis and macropinocytosis. The polypeptide is AP-1 complex subunit sigma-1 (ap1s1) (Dictyostelium discoideum (Social amoeba)).